The primary structure comprises 270 residues: Replication protein A 32 kDa subunit (270 aa).

M1 carries the N-acetylmethionine modification. 2 positions are modified to phosphoserine; by PRKDC: S4 and S8. A Phosphothreonine; by PRKDC modification is found at T21. Residues 22 to 41 are disordered; that stretch reads QSPGGFGSPTPSQAEKKSRA. The residue at position 23 (S23) is a Phosphoserine; by CDK2. Residue S29 is modified to Phosphoserine; by CDK1. S33 is subject to Phosphoserine; by PRKDC. Residues K37 and K38 each participate in a glycyl lysine isopeptide (Lys-Gly) (interchain with G-Cter in ubiquitin) cross-link. Positions 74 to 148 form a DNA-binding region, OB; it reads VTIVGIIRHA…KSLVAFKIIP (75 aa). An interaction with RAD52, TIPIN, UNG and XPA region spans residues 187-270; sequence GMGEPGNFSG…DDHFKSTDAE (84 aa).

Belongs to the replication factor A protein 2 family. As to quaternary structure, component of the replication protein A complex (RPA/RP-A), a heterotrimeric complex composed of RPA1, RPA2 and RPA3. Interacts with PRPF19; the PRP19-CDC5L complex is recruited to the sites of DNA repair where it ubiquitinates the replication protein A complex (RPA). Interacts with SERTAD3. Interacts with TIPIN. Interacts with TIMELESS. Interacts with PPP4R2; the interaction is direct, DNA damage-dependent and mediates the recruitment of the PP4 catalytic subunit PPP4C. Interacts (hyperphosphorylated) with RAD51. Interacts with SMARCAL1; the interaction is direct and mediates the recruitment to the RPA complex of SMARCAL1. Interacts with RAD52 and XPA; those interactions are direct and associate RAD52 and XPA to the RPA complex. Interacts with FBH1. Interacts with ETAA1; the interaction is direct and promotes ETAA1 recruitment at stalled replication forks. Interacts with DDI2. Interacts (in unphosphorylated form via N-terminus) with EIF4EBP3; the interaction enhances EIF4EBP3-mediated inhibition of EIF4E-mediated mRNA nuclear export. Interacts with nuclear UNG (isoform 2); this interaction mediates UNG recruitment to RPA-coated single-stranded DNA at stalled replication forks. Differentially phosphorylated throughout the cell cycle, becoming phosphorylated at the G1-S transition and dephosphorylated in late mitosis. Mainly phosphorylated at Ser-23 and Ser-29, by cyclin A-CDK2 and cyclin B-CDK1, respectively during DNA replication and mitosis. Dephosphorylation may require the serine/threonine-protein phosphatase 4. Phosphorylation at Ser-23 and Ser-29 is a prerequisite for further phosphorylation. Becomes hyperphosphorylated on additional residues including Ser-4, Ser-8, Thr-21 and Ser-33 in response to DNA damage. Hyperphosphorylation is mediated by ATM, ATR and PRKDC. Primarily recruited to DNA repair nuclear foci as a hypophosphorylated form it undergoes subsequent hyperphosphorylation, catalyzed by ATR. Hyperphosphorylation is required for RAD51 recruitment to chromatin and efficient DNA repair. Phosphorylation at Thr-21 depends upon RFWD3 presence. Post-translationally, DNA damage-induced 'Lys-63'-linked polyubiquitination by PRPF19 mediates ATRIP recruitment to the RPA complex at sites of DNA damage and activation of ATR. Ubiquitinated by RFWD3 at stalled replication forks in response to DNA damage: ubiquitination by RFWD3 does not lead to degradation by the proteasome and promotes removal of the RPA complex from stalled replication forks, promoting homologous recombination.

The protein localises to the nucleus. It localises to the PML body. In terms of biological role, as part of the heterotrimeric replication protein A complex (RPA/RP-A), binds and stabilizes single-stranded DNA intermediates, that form during DNA replication or upon DNA stress. It prevents their reannealing and in parallel, recruits and activates different proteins and complexes involved in DNA metabolism. Thereby, it plays an essential role both in DNA replication and the cellular response to DNA damage. In the cellular response to DNA damage, the RPA complex controls DNA repair and DNA damage checkpoint activation. Through recruitment of ATRIP activates the ATR kinase a master regulator of the DNA damage response. It is required for the recruitment of the DNA double-strand break repair factors RAD51 and RAD52 to chromatin in response to DNA damage. Also recruits to sites of DNA damage proteins like XPA and XPG that are involved in nucleotide excision repair and is required for this mechanism of DNA repair. Also plays a role in base excision repair (BER) probably through interaction with UNG. Also recruits SMARCAL1/HARP, which is involved in replication fork restart, to sites of DNA damage. May also play a role in telomere maintenance. This chain is Replication protein A 32 kDa subunit (Rpa2), found in Rattus norvegicus (Rat).